The following is a 405-amino-acid chain: Pulcherriminic acid synthase (405 aa).

Residues Lys-62, Asn-229, Arg-285, and Cys-353 each coordinate heme.

Belongs to the cytochrome P450 family. In terms of assembly, homodimer. Heme serves as cofactor.

The catalysed reaction is cyclo(L-leucyl-L-leucyl) + 6 reduced [2Fe-2S]-[ferredoxin] + 3 O2 + 4 H(+) = pulcherriminic acid + 6 oxidized [2Fe-2S]-[ferredoxin] + 4 H2O. Involved in the biosynthesis of pulcherrimin, a red extracellular pigment. Catalyzes the oxidation of cyclo(L-Leu-L-Leu) (cLL) to yield pulcherriminic acid which forms pulcherrimin via a nonenzymic reaction with Fe(3+). Substrates with small alkyl groups (cAA, cLG, cLP) exhibit weaker binding to CYP134A1, but substrates with larger hydrophobic side chains bind in a similar regime to cLL. This chain is Pulcherriminic acid synthase (cypX), found in Bacillus subtilis (strain 168).